A 533-amino-acid polypeptide reads, in one-letter code: DNA primase large subunit (533 aa).

4 residues coordinate [4Fe-4S] cluster: Cys298, Cys377, Cys393, and Cys433. The interval 466-492 is disordered; sequence RQKRANGSAPPKARIRPDIKGHGDRSM. Over residues 480-490 the composition is skewed to basic and acidic residues; the sequence is IRPDIKGHGDR.

The protein belongs to the eukaryotic-type primase large subunit family. Heterodimer of a catalytic subunit Prim1 and a regulatory subunit Prim2, also known as the DNA primase complex. Component of the alpha DNA polymerase complex (also known as the alpha DNA polymerase-primase complex) consisting of four subunits: the catalytic subunit PolA1, the regulatory subunit PolA2, and the primase complex subunits Prim1 and Prim2 respectively. PolA1 associates with the DNA primase complex before association with PolA2. [4Fe-4S] cluster is required as a cofactor. Expressed in embryos (at protein level).

Regulatory subunit of the DNA primase complex and component of the DNA polymerase alpha complex (also known as the alpha DNA polymerase-primase complex) which play an essential role in the initiation of DNA synthesis. During the S phase of the cell cycle, the DNA polymerase alpha complex (composed of a catalytic subunit PolA1, an accessory subunit PolA2 and two primase subunits, the catalytic subunit Prim1 and the regulatory subunit Prim2) is recruited to DNA at the replicative forks. The primase subunit of the polymerase alpha complex initiates DNA synthesis by oligomerising short RNA primers on both leading and lagging strands. These primers are initially extended by the polymerase alpha catalytic subunit and subsequently transferred to polymerase delta and polymerase epsilon for processive synthesis on the lagging and leading strand, respectively. In the primase complex, both subunits are necessary for the initial di-nucleotide formation, but the extension of the primer depends only on the catalytic subunit. Stabilizes and modulates the activity of the catalytic subunit. The polypeptide is DNA primase large subunit (Drosophila melanogaster (Fruit fly)).